Consider the following 362-residue polypeptide: Phosphoserine aminotransferase (362 aa).

Serine 9 and arginine 42 together coordinate L-glutamate. Residues 76–77, tryptophan 102, threonine 153, aspartate 174, and glutamine 197 each bind pyridoxal 5'-phosphate; that span reads GR. Lysine 198 is subject to N6-(pyridoxal phosphate)lysine. 239 to 240 contributes to the pyridoxal 5'-phosphate binding site; the sequence is NT.

It belongs to the class-V pyridoxal-phosphate-dependent aminotransferase family. SerC subfamily. In terms of assembly, homodimer. Requires pyridoxal 5'-phosphate as cofactor.

Its subcellular location is the cytoplasm. The enzyme catalyses O-phospho-L-serine + 2-oxoglutarate = 3-phosphooxypyruvate + L-glutamate. It carries out the reaction 4-(phosphooxy)-L-threonine + 2-oxoglutarate = (R)-3-hydroxy-2-oxo-4-phosphooxybutanoate + L-glutamate. It functions in the pathway amino-acid biosynthesis; L-serine biosynthesis; L-serine from 3-phospho-D-glycerate: step 2/3. It participates in cofactor biosynthesis; pyridoxine 5'-phosphate biosynthesis; pyridoxine 5'-phosphate from D-erythrose 4-phosphate: step 3/5. Functionally, catalyzes the reversible conversion of 3-phosphohydroxypyruvate to phosphoserine and of 3-hydroxy-2-oxo-4-phosphonooxybutanoate to phosphohydroxythreonine. This is Phosphoserine aminotransferase from Escherichia coli O1:K1 / APEC.